The chain runs to 249 residues: Phosphate import ATP-binding protein PstB (249 aa).

The ABC transporter domain maps to Ile4–Ile244. Gly36 to Ser43 is a binding site for ATP.

Belongs to the ABC transporter superfamily. Phosphate importer (TC 3.A.1.7) family. As to quaternary structure, the complex is composed of two ATP-binding proteins (PstB), two transmembrane proteins (PstC and PstA) and a solute-binding protein (PstS).

The protein resides in the cell membrane. It catalyses the reaction phosphate(out) + ATP + H2O = ADP + 2 phosphate(in) + H(+). Part of the ABC transporter complex PstSACB involved in phosphate import. Responsible for energy coupling to the transport system. The protein is Phosphate import ATP-binding protein PstB of Clostridium acetobutylicum (strain ATCC 824 / DSM 792 / JCM 1419 / IAM 19013 / LMG 5710 / NBRC 13948 / NRRL B-527 / VKM B-1787 / 2291 / W).